An 885-amino-acid chain; its full sequence is MNAFKLSALARLTATMGFLGGMGSAMADQQLVDQLSQLKLNVKMLDNRAGENGVDCAALGADWASCNRVLFTLSNDGQAIDGKDWVIYFHSPRQTLRVDNDQFKIAHLTGDLYKLEPTAKFSGFPAGKAVEIPVVAEYWQLFRNDFLPRWYATSGDAKPKMLANTDTENLDQFVAPFTGDQWKRTKDDKNILMTPASRFVSNADLQTLPAGALRGKIVPTPMQVKVHAQDADLRKGVALDLSTLVKPAADVVSQRFALLGVPVQTNGYPIKTDIQPGKFKGAMAVSGAYELKIGKKEAQVIGFDQAGVFYGLQSILSLVPSDGSGKIATLDASDAPRFPYRGIFLDVARNFHKKDAVLRLLDQMAAYKLNKFHFHLSDDEGWRIEIPGLPELTEVGGQRCHDLSETTCLLPQYGQGPDVYGGFFSRQDYIDIIKYAQARQIEVIPEIDMPAHARAAVVSMEARYKKLHAAGKEQEANEFRLVDPTDTSNTTSVQFFNRQSYLNPCLDSSQRFVDKVIGEIAQMHKEAGQPIKTWHFGGDEAKNIRLGAGYTDKAKPEPGKGIIDQSNEDKPWAKSQVCQTMIKEGKVADMEHLPSYFGQEVSKLVKAHGIDRMQAWQDGLKDAESSKAFATSRVGVNFWDTLYWGGFDSVNDWANKGYEVVVSNPDYVYMDFPYEVNPDERGYYWGTRFSDERKVFSFAPDNMPQNAETSVDRDGNHFNAKSDKPWPGAYGLSAQLWSETQRTDPQMEYMIFPRALSVAERSWHRAGWEQDYRAGREYKGGETHFVDTQALEKDWLRFANILGQRELAKLDKGGVAYRLPVPGARVAAGKLEANIALPGLGIEYSTDGGKQWQRYDAKAKPAVSGEVQVRSVSPDGKRYSRAEKV.

Residues 1–27 form the signal peptide; that stretch reads MNAFKLSALARLTATMGFLGGMGSAMA. Cystine bridges form between Cys56–Cys66, Cys400–Cys408, and Cys505–Cys578. The Proton donor role is filled by Glu540. The interval 866–885 is disordered; the sequence is EVQVRSVSPDGKRYSRAEKV. Residues 875–885 are compositionally biased toward basic and acidic residues; that stretch reads DGKRYSRAEKV.

This sequence belongs to the glycosyl hydrolase 20 family. As to quaternary structure, monomer.

The protein resides in the periplasm. It carries out the reaction Hydrolysis of terminal non-reducing N-acetyl-D-hexosamine residues in N-acetyl-beta-D-hexosaminides.. It functions in the pathway glycan degradation; chitin degradation. Functionally, digests the beta-1,4-glycosidic bonds in N-acetylglucosamine (GlcNAc) oligomers (mainly dimers). This is Chitobiase (chb) from Serratia marcescens.